A 486-amino-acid polypeptide reads, in one-letter code: NADH-quinone oxidoreductase subunit N (486 aa).

14 helical membrane-spanning segments follow: residues 8–28 (LTAL…ILSI), 36–56 (FVAV…YFLI), 74–94 (ILYI…SYPW), 104–124 (EFYL…ISHH), 125–145 (MASF…LIAY), 160–180 (IILS…VYSI), 201–221 (ILVV…KLSI), 239–259 (VLSF…LNFL), 269–289 (VIYF…NLMA), 298–318 (FLGY…LVSH), 329–349 (AIYL…VNLI), 376–396 (SVLT…GFIG), 410–432 (WLIG…RIIL), and 459–479 (IVIC…NPLI).

This sequence belongs to the complex I subunit 2 family. As to quaternary structure, NDH-1 is composed of 13 different subunits. Subunits NuoA, H, J, K, L, M, N constitute the membrane sector of the complex.

Its subcellular location is the cell membrane. The catalysed reaction is a quinone + NADH + 5 H(+)(in) = a quinol + NAD(+) + 4 H(+)(out). In terms of biological role, NDH-1 shuttles electrons from NADH, via FMN and iron-sulfur (Fe-S) centers, to quinones in the respiratory chain. The immediate electron acceptor for the enzyme in this species is believed to be ubiquinone. Couples the redox reaction to proton translocation (for every two electrons transferred, four hydrogen ions are translocated across the cytoplasmic membrane), and thus conserves the redox energy in a proton gradient. This is NADH-quinone oxidoreductase subunit N from Buchnera aphidicola subsp. Acyrthosiphon pisum (strain APS) (Acyrthosiphon pisum symbiotic bacterium).